Reading from the N-terminus, the 106-residue chain is Large ribosomal subunit protein uL24 (106 aa).

This sequence belongs to the universal ribosomal protein uL24 family. Part of the 50S ribosomal subunit.

One of two assembly initiator proteins, it binds directly to the 5'-end of the 23S rRNA, where it nucleates assembly of the 50S subunit. Functionally, one of the proteins that surrounds the polypeptide exit tunnel on the outside of the subunit. This Paramagnetospirillum magneticum (strain ATCC 700264 / AMB-1) (Magnetospirillum magneticum) protein is Large ribosomal subunit protein uL24.